The following is a 188-amino-acid chain: dCTP deaminase (188 aa).

Residues 111–116 (KSTYAR), 135–137 (TLE), glutamine 156, tyrosine 170, and glutamine 180 each bind dCTP. Glutamate 137 (proton donor/acceptor) is an active-site residue.

This sequence belongs to the dCTP deaminase family. As to quaternary structure, homotrimer.

The catalysed reaction is dCTP + H2O + H(+) = dUTP + NH4(+). Its pathway is pyrimidine metabolism; dUMP biosynthesis; dUMP from dCTP (dUTP route): step 1/2. In terms of biological role, catalyzes the deamination of dCTP to dUTP. This is dCTP deaminase from Pseudomonas putida (strain W619).